The following is a 379-amino-acid chain: Orotidine 5'-phosphate decarboxylase (379 aa).

Substrate is bound by residues Asp42, 64 to 66 (KTH), and 99 to 108 (DRKFGDIGHT). Catalysis depends on Lys101, which acts as the Proton donor. The disordered stretch occupies residues 165 to 198 (PTMDQFDDAEDAKDDEPATVNDNGSNMMEKPIYA). Acidic residues predominate over residues 169 to 178 (QFDDAEDAKD). Substrate-binding residues include Tyr331 and Arg350.

The protein belongs to the OMP decarboxylase family.

It carries out the reaction orotidine 5'-phosphate + H(+) = UMP + CO2. It functions in the pathway pyrimidine metabolism; UMP biosynthesis via de novo pathway; UMP from orotate: step 2/2. The chain is Orotidine 5'-phosphate decarboxylase (pyr4) from Hypocrea atroviridis (Trichoderma atroviride).